A 397-amino-acid chain; its full sequence is Elongation factor Tu (397 aa).

Residues 10–207 (KPHVNVGTVG…AIDAYVPDPV (198 aa)) form the tr-type G domain. The G1 stretch occupies residues 19-26 (GHIDHGKT). A GTP-binding site is contributed by 19 to 26 (GHIDHGKT). T26 provides a ligand contact to Mg(2+). A G2 region spans residues 60-64 (GITIA). A G3 region spans residues 81-84 (DCPG). Residues 81–85 (DCPGH) and 136–139 (NKVD) contribute to the GTP site. The tract at residues 136–139 (NKVD) is G4. The G5 stretch occupies residues 174–176 (SAL).

The protein belongs to the TRAFAC class translation factor GTPase superfamily. Classic translation factor GTPase family. EF-Tu/EF-1A subfamily. Monomer.

It is found in the cytoplasm. The catalysed reaction is GTP + H2O = GDP + phosphate + H(+). GTP hydrolase that promotes the GTP-dependent binding of aminoacyl-tRNA to the A-site of ribosomes during protein biosynthesis. The sequence is that of Elongation factor Tu from Syntrophobacter fumaroxidans (strain DSM 10017 / MPOB).